Consider the following 252-residue polypeptide: Sulfate transporter CysZ (252 aa).

Transmembrane regions (helical) follow at residues 29 to 49, 66 to 86, 141 to 160, 164 to 186, and 212 to 232; these read FVLL…FYIF, FLSW…LATF, LVYI…IPAL, VAPF…DYPF, and ALVS…PVAV.

This sequence belongs to the CysZ family.

Its subcellular location is the cell inner membrane. Functionally, high affinity, high specificity proton-dependent sulfate transporter, which mediates sulfate uptake. Provides the sulfur source for the cysteine synthesis pathway. This Vibrio atlanticus (strain LGP32) (Vibrio splendidus (strain Mel32)) protein is Sulfate transporter CysZ.